We begin with the raw amino-acid sequence, 241 residues long: Uridylate kinase (241 aa).

Residue 12 to 15 (KISG) coordinates ATP. Residues 20 to 25 (GDKGNG) form an involved in allosteric activation by GTP region. Residue G54 coordinates UMP. Residues G55 and R59 each contribute to the ATP site. Residues D74 and 135–142 (TGNPYFST) each bind UMP. ATP-binding residues include N163, Y169, and D172.

Belongs to the UMP kinase family. As to quaternary structure, homohexamer.

Its subcellular location is the cytoplasm. The catalysed reaction is UMP + ATP = UDP + ADP. Its pathway is pyrimidine metabolism; CTP biosynthesis via de novo pathway; UDP from UMP (UMPK route): step 1/1. Allosterically activated by GTP. Inhibited by UTP. Catalyzes the reversible phosphorylation of UMP to UDP. The sequence is that of Uridylate kinase from Lactobacillus acidophilus (strain ATCC 700396 / NCK56 / N2 / NCFM).